The following is an 862-amino-acid chain: Ubiquitin carboxyl-terminal hydrolase 13 (862 aa).

The segment at 182–290 (QASKHAKSLV…KHLAHFGIDM (109 aa)) adopts a UBP-type; degenerate zinc-finger fold. Zn(2+)-binding residues include Cys-206, Cys-209, Cys-226, and His-239. A USP domain is found at 331-860 (TGMKNLGNSC…LGYIYFYHRI (530 aa)). Cys-340 functions as the Nucleophile in the catalytic mechanism. UBA domains are found at residues 647–688 (DIDE…IIAH) and 722–762 (QPPE…IFSH). His-822 functions as the Proton acceptor in the catalytic mechanism.

It belongs to the peptidase C19 family.

The catalysed reaction is Thiol-dependent hydrolysis of ester, thioester, amide, peptide and isopeptide bonds formed by the C-terminal Gly of ubiquitin (a 76-residue protein attached to proteins as an intracellular targeting signal).. With respect to regulation, specifically inhibited by spautin-1 (specific and potent autophagy inhibitor-1), a derivative of MBCQ that binds to USP13 and inhibits deubiquitinase activity. Its function is as follows. Deubiquitinase that mediates deubiquitination of target proteins and is involved in various processes such as autophagy and endoplasmic reticulum-associated degradation (ERAD). The protein is Ubiquitin carboxyl-terminal hydrolase 13 (USP13) of Gallus gallus (Chicken).